The following is a 391-amino-acid chain: Serpin B13 (391 aa).

It belongs to the serpin family. Ov-serpin subfamily. As to expression, skin specific.

It is found in the cytoplasm. In terms of biological role, may play a role in the proliferation or differentiation of keratinocytes. This chain is Serpin B13 (SERPINB13), found in Homo sapiens (Human).